Reading from the N-terminus, the 128-residue chain is Large ribosomal subunit protein eL22 (128 aa).

This sequence belongs to the eukaryotic ribosomal protein eL22 family. As to quaternary structure, component of the large ribosomal subunit.

It is found in the cytoplasm. Component of the large ribosomal subunit. The ribosome is a large ribonucleoprotein complex responsible for the synthesis of proteins in the cell. The chain is Large ribosomal subunit protein eL22 (RPL22) from Gallus gallus (Chicken).